The chain runs to 309 residues: Succinoglycan biosynthesis protein ExoM (309 aa).

This sequence belongs to the glycosyltransferase 2 family.

It is found in the cell inner membrane. It functions in the pathway glycan metabolism; exopolysaccharide biosynthesis. Glycosyltransferase required for the synthesis of succinoglycan (EPS I). Needed for the addition of the fourth sugar (glucose), catalyzes the formation of a beta-1,4 linkage between the third acetylated sugar and the fourth sugar. In Rhizobium meliloti (strain 1021) (Ensifer meliloti), this protein is Succinoglycan biosynthesis protein ExoM (exoM).